We begin with the raw amino-acid sequence, 163 residues long: Nucleotide-binding protein Cla_1551 (163 aa).

The protein belongs to the YajQ family.

Functionally, nucleotide-binding protein. This is Nucleotide-binding protein Cla_1551 from Campylobacter lari (strain RM2100 / D67 / ATCC BAA-1060).